The chain runs to 375 residues: uncharacterized protein (375 aa).

It belongs to the mimivirus L17x/L18x family.

This is an uncharacterized protein from Acanthamoeba polyphaga (Amoeba).